The following is a 685-amino-acid chain: MEETIENVEVPSSNVSKQNDDGLDMKTLFVRSIPQDVTDEQLADFFSNFAPIKHAVVVKDTNKRSRGFGFVSFAVEDDTKEALAKARKTKFNGHILRVDIAKRRDRSKKTSEVVEKSTPESSEKITGQNNEDEDDADGEDSMLKGKPKLIIRNMPWSCRDPVKLKKIFGRYGTVVEATIPRKRDGKLCGFAFVTMKKISNCRIALENTKDLKIDGRKVAVDFAVQKNRWEDYKKAQPEMNDKDDNESGNEDAEENHDDEEDENEEEDRQVDQASKNKESKRKAQNKREDFSVFVRNVPYDATEESLAPHFSKFGSVKYALPVIDKSTGLAKGTAFVAFKDQYTYNECIKNAPAAGSTSLLIGDDVMPEYVYEGRVLSITPTLVREDAGRMAEKNAAKRKEALGKAPGEKDRRNLYLLNEGRVVEGSKMADLLTNTDMEIREKSYKLRVEQLKKNPSLHLSMTRLAIRNLPRAMNDKALKALARKAVVEFATEVKNKERHPLSKEEIIRSTKEKYKFMGPDEIEAQKKKDKKSGVVKQAKVIMEVKGSTAGRSRGYGFVEFRDHKNALMGLRWLNCHAVTSDEILEGLNDDEKKQVDNDLGKGRRLCVEFAIENSNVVKRRREQLKQARTKRTRPDNEDTGDVGESENKKPKKEEATTPTNPDDKKMGDDIKRIIGFKRKRKHAKK.

Residues 1–21 (MEETIENVEVPSSNVSKQNDD) form a disordered region. Residues 26 to 103 (KTLFVRSIPQ…HILRVDIAKR (78 aa)) form the RRM 1 domain. Basic and acidic residues predominate over residues 106–123 (RSKKTSEVVEKSTPESSE). The segment at 106 to 142 (RSKKTSEVVEKSTPESSEKITGQNNEDEDDADGEDSM) is disordered. Acidic residues predominate over residues 130 to 140 (NEDEDDADGED). The RRM 2 domain occupies 147–225 (PKLIIRNMPW…RKVAVDFAVQ (79 aa)). A compositionally biased stretch (basic and acidic residues) spans 231–242 (DYKKAQPEMNDK). The interval 231-285 (DYKKAQPEMNDKDDNESGNEDAEENHDDEEDENEEEDRQVDQASKNKESKRKAQN) is disordered. The span at 243–268 (DDNESGNEDAEENHDDEEDENEEEDR) shows a compositional bias: acidic residues. Ser247 is subject to Phosphoserine. 2 consecutive RRM domains span residues 290-383 (FSVF…PTLV) and 462-612 (TRLA…FAIE). The residue at position 379 (Thr379) is a Phosphothreonine. Over residues 622 to 631 (EQLKQARTKR) the composition is skewed to basic residues. The disordered stretch occupies residues 622–685 (EQLKQARTKR…FKRKRKHAKK (64 aa)). Positions 645–672 (SENKKPKKEEATTPTNPDDKKMGDDIKR) are enriched in basic and acidic residues. A compositionally biased stretch (basic residues) spans 674-685 (IGFKRKRKHAKK).

As to quaternary structure, interacts with NOP1.

It localises to the nucleus. The protein localises to the nucleolus. Required for 60S ribosomal subunit synthesis. Probably involved in the processing of 27S rRNA to produce mature 25S rRNA. The polypeptide is Nucleolar protein 4 (NOP4) (Saccharomyces cerevisiae (strain ATCC 204508 / S288c) (Baker's yeast)).